We begin with the raw amino-acid sequence, 134 residues long: Putative pre-16S rRNA nuclease (134 aa).

Belongs to the YqgF nuclease family.

It is found in the cytoplasm. In terms of biological role, could be a nuclease involved in processing of the 5'-end of pre-16S rRNA. The protein is Putative pre-16S rRNA nuclease of Helicobacter pylori (strain P12).